Reading from the N-terminus, the 257-residue chain is Nickel import system ATP-binding protein NikD (257 aa).

The region spanning 4-245 (IDIQNLTIKN…HLHPYTERLI (242 aa)) is the ABC transporter domain. 37–44 (GESGAGKS) lines the ATP pocket.

The protein belongs to the ABC transporter superfamily. The complex is composed of two ATP-binding proteins (NikD and NikE), two transmembrane proteins (NikB and NikC) and a solute-binding protein (NikA).

The protein resides in the cell membrane. It carries out the reaction Ni(2+)(out) + ATP + H2O = Ni(2+)(in) + ADP + phosphate + H(+). In terms of biological role, part of the ABC transporter complex NikABCDE (Opp2) involved in nickel import. Probably responsible for energy coupling to the transport system. The protein is Nickel import system ATP-binding protein NikD of Staphylococcus aureus (strain MSSA476).